The chain runs to 348 residues: WRKY transcription factor WRKY71 (348 aa).

Positions 50 to 84 form a coiled coil; sequence VAALEAELKRMGAENRQLSEMLAAVAAKYEALQSQ. Disordered regions lie at residues 91-141 and 246-287; these read ASAN…APHH and GEHN…APVV. Positions 102–114 are enriched in low complexity; that stretch reads NQSSTSEGGSVSP. A Nuclear localization signal motif is present at residues 116–122; it reads RKRKSES. Residues 126–136 are compositionally biased toward pro residues; it reads SPPPPPPPHPH. Positions 187–253 form a DNA-binding region, WRKY; the sequence is DLSLVVKDGY…YEGEHNHGQP (67 aa). The transcription repression of gibberellic acid (GA)-induced promoters stretch occupies residues 267–348; the sequence is SGKSAGKPPH…RILELSPTKD (82 aa). The span at 275–286 shows a compositional bias: pro residues; it reads PHAPAAAPPAPV.

The protein belongs to the WRKY group II-a family. In terms of assembly, interacts with WRKY51; this interaction promotes W box binding of the complex WRKY51/WRKY71 in a zinc ion-dependent manner. In terms of tissue distribution, highly expressed in aleurone cells. In seeds, predominantly present in the plumule, radicle and scutellum of the embryo. Expressed in roots, stems, young leaves and spikelets.

The protein localises to the nucleus. Functionally, transcription repressor. Interacts specifically with the W box (5'-(T)TGAC[CT]-3'), a frequently occurring elicitor-responsive cis-acting element. Represses specifically gibberellic acid (GA)-induced promoters in aleurone cells, probably by interfering with GAM1. Regulates, probably indirectly, the activation of defense-related genes such as GF14E during defense response. Modulates plant innate immunity against X.oryzae pv. oryzae (Xoo). Confers resistance to the virulent bacterial pathogen X.oryzae pv. oryzae (Xoo) 13751, probably via the regulation of NPR1 and PR1b defense signaling pathways. The chain is WRKY transcription factor WRKY71 from Oryza sativa subsp. indica (Rice).